The following is a 184-amino-acid chain: uncharacterized protein (184 aa).

The Nudix hydrolase domain maps to 36–164 (LRHRATYIVV…TPDSLKALAL (129 aa)). A Nudix box motif is present at residues 73-95 (GGVVQADEQLLESARREAEEELG). Mg(2+) contacts are provided by E89 and E93.

The protein belongs to the Nudix hydrolase family. The cofactor is Mg(2+).

This is an uncharacterized protein from Salmonella typhi.